Here is a 448-residue protein sequence, read N- to C-terminus: Trigger factor (448 aa).

Residues 172–257 (GDRVTVDFVG…MKKIEWPHMP (86 aa)) form the PPIase FKBP-type domain.

Belongs to the FKBP-type PPIase family. Tig subfamily.

The protein localises to the cytoplasm. It carries out the reaction [protein]-peptidylproline (omega=180) = [protein]-peptidylproline (omega=0). Functionally, involved in protein export. Acts as a chaperone by maintaining the newly synthesized protein in an open conformation. Functions as a peptidyl-prolyl cis-trans isomerase. This Burkholderia vietnamiensis (strain G4 / LMG 22486) (Burkholderia cepacia (strain R1808)) protein is Trigger factor.